Reading from the N-terminus, the 115-residue chain is UPF0127 protein PH1112 (115 aa).

This sequence belongs to the UPF0127 family.

The sequence is that of UPF0127 protein PH1112 from Pyrococcus horikoshii (strain ATCC 700860 / DSM 12428 / JCM 9974 / NBRC 100139 / OT-3).